A 424-amino-acid chain; its full sequence is Serine--tRNA ligase (424 aa).

232–234 serves as a coordination point for L-serine; the sequence is TAE. 263–265 serves as a coordination point for ATP; the sequence is RRE. An L-serine-binding site is contributed by Glu286. 350–353 is a binding site for ATP; the sequence is EISS. Ser384 lines the L-serine pocket.

Belongs to the class-II aminoacyl-tRNA synthetase family. Type-1 seryl-tRNA synthetase subfamily. Homodimer. The tRNA molecule binds across the dimer.

It localises to the cytoplasm. The enzyme catalyses tRNA(Ser) + L-serine + ATP = L-seryl-tRNA(Ser) + AMP + diphosphate + H(+). It carries out the reaction tRNA(Sec) + L-serine + ATP = L-seryl-tRNA(Sec) + AMP + diphosphate + H(+). It participates in aminoacyl-tRNA biosynthesis; selenocysteinyl-tRNA(Sec) biosynthesis; L-seryl-tRNA(Sec) from L-serine and tRNA(Sec): step 1/1. Catalyzes the attachment of serine to tRNA(Ser). Is also able to aminoacylate tRNA(Sec) with serine, to form the misacylated tRNA L-seryl-tRNA(Sec), which will be further converted into selenocysteinyl-tRNA(Sec). The sequence is that of Serine--tRNA ligase from Prochlorococcus marinus subsp. pastoris (strain CCMP1986 / NIES-2087 / MED4).